The following is a 298-amino-acid chain: Protease HtpX homolog (298 aa).

Helical transmembrane passes span 14-34 (VVLLVVFFALLALIGASAGYL) and 39-59 (YAMGLVLALVIGVIYATSMIF). His143 is a Zn(2+) binding site. Glu144 is a catalytic residue. His147 contributes to the Zn(2+) binding site. The next 2 helical transmembrane spans lie at 158–178 (IAVALASAVTVISSIGGRMLW) and 197–217 (IITLLLSLLSLLLAPLVASLI). Glu226 contributes to the Zn(2+) binding site.

Belongs to the peptidase M48B family. The cofactor is Zn(2+).

It localises to the cell membrane. The chain is Protease HtpX homolog from Streptococcus pyogenes serotype M6 (strain ATCC BAA-946 / MGAS10394).